The following is an 81-amino-acid chain: CLAVATA3/ESR (CLE)-related protein 25 (81 aa).

The N-terminal stretch at Met-1–Ser-30 is a signal peptide. The tract at residues Lys-57–Val-81 is disordered. Hydroxyproline is present on residues Pro-61 and Pro-64. Pro-64 is a glycosylation site (O-linked (Ara...) hydroxyproline). Over residues Ile-67–Val-81 the composition is skewed to basic and acidic residues.

It belongs to the CLV3/ESR signal peptide family. Post-translationally, the O-glycosylation (arabinosylation) of the hydroxyproline Pro-64 enhances binding affinity of the CLE25p peptide for its receptor. In terms of tissue distribution, mostly expressed in flowers and siliques, and, to a lower extent, in roots, stems, apex, seedlings, leaves and pollen.

The protein localises to the secreted. It localises to the extracellular space. Its function is as follows. Extracellular signal peptide that regulates cell fate. Represses root apical meristem maintenance. Regulates the transition of protophloem cells from proliferation to differentiation, thus impinging on postembryonic growth capacity of the root meristem; this signaling pathway requires CRN and CLV2. The chain is CLAVATA3/ESR (CLE)-related protein 25 from Arabidopsis thaliana (Mouse-ear cress).